Reading from the N-terminus, the 165-residue chain is Neuritin-like protein (165 aa).

The first 35 residues, 1 to 35, serve as a signal peptide directing secretion; that stretch reads MMRCCRRRCCCRQPPHALRPLLLLPLVLLPPLAAA. Alanine 139 carries the GPI-anchor amidated alanine lipid modification. Residues 140–165 constitute a propeptide, removed in mature form; that stretch reads PALPMAPAPPLLAAALALAYLLRPLA.

The protein belongs to the neuritin family.

The protein resides in the cell membrane. In Homo sapiens (Human), this protein is Neuritin-like protein (NRN1L).